A 156-amino-acid polypeptide reads, in one-letter code: Small ribosomal subunit protein uS7 (156 aa).

The protein belongs to the universal ribosomal protein uS7 family. As to quaternary structure, part of the 30S ribosomal subunit. Contacts proteins S9 and S11.

Functionally, one of the primary rRNA binding proteins, it binds directly to 16S rRNA where it nucleates assembly of the head domain of the 30S subunit. Is located at the subunit interface close to the decoding center, probably blocks exit of the E-site tRNA. The polypeptide is Small ribosomal subunit protein uS7 (Paenarthrobacter aurescens (strain TC1)).